The following is a 273-amino-acid chain: Formamidopyrimidine-DNA glycosylase (273 aa).

Proline 2 functions as the Schiff-base intermediate with DNA in the catalytic mechanism. The active-site Proton donor is the glutamate 3. The Proton donor; for beta-elimination activity role is filled by lysine 57. DNA contacts are provided by histidine 90, arginine 109, and lysine 150. The FPG-type zinc-finger motif lies at 235-269; sequence KVYGRAGKECPVCSSKIEEEKIGQRNSFWCGKCQF. Residue arginine 259 is the Proton donor; for delta-elimination activity of the active site.

It belongs to the FPG family. As to quaternary structure, monomer. Zn(2+) serves as cofactor.

The catalysed reaction is Hydrolysis of DNA containing ring-opened 7-methylguanine residues, releasing 2,6-diamino-4-hydroxy-5-(N-methyl)formamidopyrimidine.. The enzyme catalyses 2'-deoxyribonucleotide-(2'-deoxyribose 5'-phosphate)-2'-deoxyribonucleotide-DNA = a 3'-end 2'-deoxyribonucleotide-(2,3-dehydro-2,3-deoxyribose 5'-phosphate)-DNA + a 5'-end 5'-phospho-2'-deoxyribonucleoside-DNA + H(+). Functionally, involved in base excision repair of DNA damaged by oxidation or by mutagenic agents. Acts as a DNA glycosylase that recognizes and removes damaged bases. Has a preference for oxidized purines, such as 7,8-dihydro-8-oxoguanine (8-oxoG). Has AP (apurinic/apyrimidinic) lyase activity and introduces nicks in the DNA strand. Cleaves the DNA backbone by beta-delta elimination to generate a single-strand break at the site of the removed base with both 3'- and 5'-phosphates. In Aliivibrio fischeri (strain MJ11) (Vibrio fischeri), this protein is Formamidopyrimidine-DNA glycosylase.